Here is a 99-residue protein sequence, read N- to C-terminus: uncharacterized protein (99 aa).

Transmembrane regions (helical) follow at residues 7–29 (FFIS…YTLY), 39–61 (FISS…ARYN), and 68–90 (FCNL…LWLL).

Its subcellular location is the cell membrane. This is an uncharacterized protein from Archaeoglobus fulgidus (strain ATCC 49558 / DSM 4304 / JCM 9628 / NBRC 100126 / VC-16).